A 313-amino-acid polypeptide reads, in one-letter code: MSQKPVLVILGPTASGKTELAFRIARKTGGEIISADSRQIYRSMDIGTAKPPKWMLNEVKHHFIDEKEIGEPFSAGDFAEQAAERIRELRQRGITPIVAGGSTLYLEGLLKGFAELPQSNPEIRARLKHELELHGAEALYRRLEAFDPEQAKTLDPTKTQRLIRSLEIIEISGTTVTALQRKTSGPPPGIEFTVIALDLPREVLYERINRRTSEMMHAGLEAETRHLFDKFRDEWRSKKLNALATVGYRELFEHFEGLYNLETAEALIAQHTRNYAKRQLTFFRNRLDVEWVKGPLDEAGIEALVESLCEKIA.

11–18 (GPTASGKT) is a binding site for ATP. Position 13–18 (13–18 (TASGKT)) interacts with substrate. Interaction with substrate tRNA regions lie at residues 36 to 39 (DSRQ) and 160 to 164 (QRLIR).

Belongs to the IPP transferase family. As to quaternary structure, monomer. The cofactor is Mg(2+).

It carries out the reaction adenosine(37) in tRNA + dimethylallyl diphosphate = N(6)-dimethylallyladenosine(37) in tRNA + diphosphate. Catalyzes the transfer of a dimethylallyl group onto the adenine at position 37 in tRNAs that read codons beginning with uridine, leading to the formation of N6-(dimethylallyl)adenosine (i(6)A). The chain is tRNA dimethylallyltransferase from Chlorobaculum parvum (strain DSM 263 / NCIMB 8327) (Chlorobium vibrioforme subsp. thiosulfatophilum).